Reading from the N-terminus, the 238-residue chain is Ribonuclease PH (238 aa).

Phosphate contacts are provided by residues Arg86 and 124-126 (GTR).

Belongs to the RNase PH family. Homohexameric ring arranged as a trimer of dimers.

It carries out the reaction tRNA(n+1) + phosphate = tRNA(n) + a ribonucleoside 5'-diphosphate. Phosphorolytic 3'-5' exoribonuclease that plays an important role in tRNA 3'-end maturation. Removes nucleotide residues following the 3'-CCA terminus of tRNAs; can also add nucleotides to the ends of RNA molecules by using nucleoside diphosphates as substrates, but this may not be physiologically important. Probably plays a role in initiation of 16S rRNA degradation (leading to ribosome degradation) during starvation. The polypeptide is Ribonuclease PH (Yersinia pseudotuberculosis serotype O:1b (strain IP 31758)).